The primary structure comprises 461 residues: Porin AaxA (461 aa).

Positions 1 to 22 (MSFRSVLLTALLSLSFTTTMQA) are cleaved as a signal peptide.

This sequence belongs to the OprB family.

It localises to the cell outer membrane. Facilitates L-arginine uptake, as part of the AaxABC system. The arginine uptake by the bacterium in the macrophage may be a virulence factor against the host innate immune response. The protein is Porin AaxA (aaxA) of Chlamydia trachomatis serovar A (strain ATCC VR-571B / DSM 19440 / HAR-13).